The primary structure comprises 320 residues: 4-hydroxy-3-methylbut-2-enyl diphosphate reductase 2 (320 aa).

A [4Fe-4S] cluster-binding site is contributed by Cys-18. (2E)-4-hydroxy-3-methylbut-2-enyl diphosphate-binding residues include His-47 and His-81. Dimethylallyl diphosphate is bound by residues His-47 and His-81. The isopentenyl diphosphate site is built by His-47 and His-81. Position 103 (Cys-103) interacts with [4Fe-4S] cluster. A (2E)-4-hydroxy-3-methylbut-2-enyl diphosphate-binding site is contributed by His-131. His-131 provides a ligand contact to dimethylallyl diphosphate. Isopentenyl diphosphate is bound at residue His-131. Glu-133 (proton donor) is an active-site residue. Thr-172 is a (2E)-4-hydroxy-3-methylbut-2-enyl diphosphate binding site. Cys-202 contacts [4Fe-4S] cluster. Ser-230, Ser-231, Asn-232, and Ser-275 together coordinate (2E)-4-hydroxy-3-methylbut-2-enyl diphosphate. Residues Ser-230, Ser-231, Asn-232, and Ser-275 each contribute to the dimethylallyl diphosphate site. Isopentenyl diphosphate contacts are provided by Ser-230, Ser-231, Asn-232, and Ser-275.

The protein belongs to the IspH family. The cofactor is [4Fe-4S] cluster.

It catalyses the reaction isopentenyl diphosphate + 2 oxidized [2Fe-2S]-[ferredoxin] + H2O = (2E)-4-hydroxy-3-methylbut-2-enyl diphosphate + 2 reduced [2Fe-2S]-[ferredoxin] + 2 H(+). The catalysed reaction is dimethylallyl diphosphate + 2 oxidized [2Fe-2S]-[ferredoxin] + H2O = (2E)-4-hydroxy-3-methylbut-2-enyl diphosphate + 2 reduced [2Fe-2S]-[ferredoxin] + 2 H(+). Its pathway is isoprenoid biosynthesis; dimethylallyl diphosphate biosynthesis; dimethylallyl diphosphate from (2E)-4-hydroxy-3-methylbutenyl diphosphate: step 1/1. It functions in the pathway isoprenoid biosynthesis; isopentenyl diphosphate biosynthesis via DXP pathway; isopentenyl diphosphate from 1-deoxy-D-xylulose 5-phosphate: step 6/6. Functionally, catalyzes the conversion of 1-hydroxy-2-methyl-2-(E)-butenyl 4-diphosphate (HMBPP) into a mixture of isopentenyl diphosphate (IPP) and dimethylallyl diphosphate (DMAPP). Acts in the terminal step of the DOXP/MEP pathway for isoprenoid precursor biosynthesis. This is 4-hydroxy-3-methylbut-2-enyl diphosphate reductase 2 from Rhodopseudomonas palustris (strain ATCC BAA-98 / CGA009).